A 23-amino-acid chain; its full sequence is Paralytic peptide 2 (23 aa).

C7 and C19 are disulfide-bonded.

The protein belongs to the GBP/PSP1/paralytic peptide family. In terms of tissue distribution, hemolymph.

Its function is as follows. Causes rapid, rigid paralysis when injected into Lepidopteran larvae. The physiological role may be to reduce hemolymph loss following injury and promote wound healing. This is Paralytic peptide 2 from Manduca sexta (Tobacco hawkmoth).